Consider the following 509-residue polypeptide: Protein root UVB sensitive 5 (509 aa).

The interval 22 to 49 (CQPKRRRVEHLRCSAQPSSIREDDEDAD) is disordered.

This sequence belongs to the RUS1 family.

This Arabidopsis thaliana (Mouse-ear cress) protein is Protein root UVB sensitive 5.